Reading from the N-terminus, the 376-residue chain is 23S rRNA (uracil(747)-C(5))-methyltransferase RlmC (376 aa).

4 residues coordinate [4Fe-4S] cluster: Cys-3, Cys-11, Cys-14, and Cys-87. The S-adenosyl-L-methionine site is built by Gln-212, Phe-241, Glu-262, and Asn-307. The active-site Nucleophile is the Cys-334.

It belongs to the class I-like SAM-binding methyltransferase superfamily. RNA M5U methyltransferase family. RlmC subfamily.

The enzyme catalyses uridine(747) in 23S rRNA + S-adenosyl-L-methionine = 5-methyluridine(747) in 23S rRNA + S-adenosyl-L-homocysteine + H(+). Its function is as follows. Catalyzes the formation of 5-methyl-uridine at position 747 (m5U747) in 23S rRNA. The sequence is that of 23S rRNA (uracil(747)-C(5))-methyltransferase RlmC from Pectobacterium carotovorum subsp. carotovorum (strain PC1).